Here is an 865-residue protein sequence, read N- to C-terminus: Fanconi-associated nuclease 1 homolog (865 aa).

Residues 35-62 form a UBZ4-type zinc finger; that stretch reads GKICPLCETKFSLASYKSHMNTCNVADD. Positions 38, 41, 53, and 57 each coordinate Zn(2+). Disordered regions lie at residues 90 to 140 and 162 to 187; these read DASF…SLDV and RRSS…PVKK. 2 stretches are compositionally biased toward basic and acidic residues: residues 93–112 and 174–187; these read FSDK…REVP and DQAD…PVKK. Positions 682, 810, 825, and 826 each coordinate Mn(2+). Residues 744-857 form the VRR-NUC domain; it reads QELIEENIRK…GIRAEVCHVA (114 aa).

It belongs to the FAN1 family. Requires Mn(2+) as cofactor. The cofactor is Mg(2+).

The protein localises to the nucleus. The enzyme catalyses Hydrolytically removes 5'-nucleotides successively from the 3'-hydroxy termini of 3'-hydroxy-terminated oligonucleotides.. In terms of biological role, nuclease required for the repair of DNA interstrand cross-links (ICL). Acts as a 5'-3' exonuclease that anchors at a cut end of DNA and cleaves DNA successively at every third nucleotide, allowing to excise an ICL from one strand through flanking incisions. In Caenorhabditis elegans, this protein is Fanconi-associated nuclease 1 homolog (fan-1).